The chain runs to 254 residues: Type III pantothenate kinase (254 aa).

6–13 (DVGNSNIV) provides a ligand contact to ATP. Substrate-binding positions include Tyr100 and 107–110 (GADR). The active-site Proton acceptor is the Asp109. A K(+)-binding site is contributed by Asp129. Thr132 is an ATP binding site. Thr184 contacts substrate.

Belongs to the type III pantothenate kinase family. As to quaternary structure, homodimer. The cofactor is NH4(+). K(+) serves as cofactor.

It is found in the cytoplasm. The enzyme catalyses (R)-pantothenate + ATP = (R)-4'-phosphopantothenate + ADP + H(+). It participates in cofactor biosynthesis; coenzyme A biosynthesis; CoA from (R)-pantothenate: step 1/5. In terms of biological role, catalyzes the phosphorylation of pantothenate (Pan), the first step in CoA biosynthesis. The protein is Type III pantothenate kinase of Pelobacter propionicus (strain DSM 2379 / NBRC 103807 / OttBd1).